Reading from the N-terminus, the 227-residue chain is Cytochrome c oxidase subunit 2 (227 aa).

The Mitochondrial intermembrane portion of the chain corresponds to 1 to 14 (MAYPFQLGLQDATS). The chain crosses the membrane as a helical span at residues 15 to 45 (PIMEELMNFHDHTLMIVFLISTLVLYIISLM). Residues 46–59 (LTTKLTHTSTMDAQ) are Mitochondrial matrix-facing. The chain crosses the membrane as a helical span at residues 60–87 (EVETIWTILPAVILILIALPSLRILYMM). The Mitochondrial intermembrane portion of the chain corresponds to 88-227 (DEINNPALTV…YFENWSASMI (140 aa)). The Cu cation site is built by His-161, Cys-196, Glu-198, Cys-200, His-204, and Met-207. Position 198 (Glu-198) interacts with Mg(2+). Phosphotyrosine is present on Tyr-218.

It belongs to the cytochrome c oxidase subunit 2 family. In terms of assembly, component of the cytochrome c oxidase (complex IV, CIV), a multisubunit enzyme composed of 14 subunits. The complex is composed of a catalytic core of 3 subunits MT-CO1, MT-CO2 and MT-CO3, encoded in the mitochondrial DNA, and 11 supernumerary subunits COX4I, COX5A, COX5B, COX6A, COX6B, COX6C, COX7A, COX7B, COX7C, COX8 and NDUFA4, which are encoded in the nuclear genome. The complex exists as a monomer or a dimer and forms supercomplexes (SCs) in the inner mitochondrial membrane with NADH-ubiquinone oxidoreductase (complex I, CI) and ubiquinol-cytochrome c oxidoreductase (cytochrome b-c1 complex, complex III, CIII), resulting in different assemblies (supercomplex SCI(1)III(2)IV(1) and megacomplex MCI(2)III(2)IV(2)). Found in a complex with TMEM177, COA6, COX18, COX20, SCO1 and SCO2. Interacts with TMEM177 in a COX20-dependent manner. Interacts with COX20. Interacts with COX16. Requires Cu cation as cofactor.

It localises to the mitochondrion inner membrane. It carries out the reaction 4 Fe(II)-[cytochrome c] + O2 + 8 H(+)(in) = 4 Fe(III)-[cytochrome c] + 2 H2O + 4 H(+)(out). Its function is as follows. Component of the cytochrome c oxidase, the last enzyme in the mitochondrial electron transport chain which drives oxidative phosphorylation. The respiratory chain contains 3 multisubunit complexes succinate dehydrogenase (complex II, CII), ubiquinol-cytochrome c oxidoreductase (cytochrome b-c1 complex, complex III, CIII) and cytochrome c oxidase (complex IV, CIV), that cooperate to transfer electrons derived from NADH and succinate to molecular oxygen, creating an electrochemical gradient over the inner membrane that drives transmembrane transport and the ATP synthase. Cytochrome c oxidase is the component of the respiratory chain that catalyzes the reduction of oxygen to water. Electrons originating from reduced cytochrome c in the intermembrane space (IMS) are transferred via the dinuclear copper A center (CU(A)) of subunit 2 and heme A of subunit 1 to the active site in subunit 1, a binuclear center (BNC) formed by heme A3 and copper B (CU(B)). The BNC reduces molecular oxygen to 2 water molecules using 4 electrons from cytochrome c in the IMS and 4 protons from the mitochondrial matrix. The sequence is that of Cytochrome c oxidase subunit 2 (MT-CO2) from Maxomys surifer (Indomalayan maxomys).